Consider the following 251-residue polypeptide: Chloride intracellular channel protein 5 (251 aa).

Positions Met-1 to Pro-98 are required for insertion into the membrane. Residues Cys-32–Ser-35 carry the G-site motif. A helical transmembrane segment spans residues Phe-34 to Val-54. The 141-residue stretch at Tyr-101–Tyr-241 folds into the GST C-terminal domain.

The protein belongs to the chloride channel CLIC family. Component of a multimeric complex consisting of several cytoskeletal proteins, including actin, ezrin, alpha-actinin, gelsolin, and IQGAP1. Interacts with AKAP9. Interacts with TPRN. TPRN, CLIC5 and PTPQR form concentric rings at the base of stereocilia and may form a complex. Interacts with EZR, MYO6 and RDX; the proteins may work together as a complex to stabilize linkages between the plasma membrane and subjacent actin cytoskeleton at the stereocilium base. As to expression, detected in cochlea, in cochlear and vestibular hair cell bundles in the organ of Corti (at protein level). Expressed neonatal and adult cardiomyocytes (at protein level).

Its subcellular location is the golgi apparatus. It localises to the cytoplasm. The protein localises to the cytoskeleton. The protein resides in the microtubule organizing center. It is found in the centrosome. Its subcellular location is the cell cortex. It localises to the membrane. The protein localises to the apical cell membrane. The protein resides in the mitochondrion. It is found in the cell projection. Its subcellular location is the stereocilium. It carries out the reaction Na(+)(in) = Na(+)(out). The catalysed reaction is K(+)(in) = K(+)(out). The enzyme catalyses chloride(in) = chloride(out). Its activity is regulated as follows. Inhibited by F-actin. In the soluble state, catalyzes glutaredoxin-like thiol disulfide exchange reactions with reduced glutathione as electron donor. Can insert into membranes and form non-selective ion channels almost equally permeable to Na(+), K(+) and Cl(-). Required for normal hearing. It is necessary for the formation of stereocilia in the inner ear and normal development of the organ of Corti. May play a role in the regulation of transepithelial ion absorption and secretion. Is required for the development and/or maintenance of the proper glomerular endothelial cell and podocyte architecture. Plays a role in formation of the lens suture in the eye, which is important for normal optical properties of the lens. The chain is Chloride intracellular channel protein 5 (Clic5) from Rattus norvegicus (Rat).